Consider the following 275-residue polypeptide: Ribosomal RNA small subunit methyltransferase A (275 aa).

Positions 19, 21, 46, 71, 94, and 117 each coordinate S-adenosyl-L-methionine.

It belongs to the class I-like SAM-binding methyltransferase superfamily. rRNA adenine N(6)-methyltransferase family. RsmA subfamily.

The protein localises to the cytoplasm. It carries out the reaction adenosine(1518)/adenosine(1519) in 16S rRNA + 4 S-adenosyl-L-methionine = N(6)-dimethyladenosine(1518)/N(6)-dimethyladenosine(1519) in 16S rRNA + 4 S-adenosyl-L-homocysteine + 4 H(+). In terms of biological role, specifically dimethylates two adjacent adenosines (A1518 and A1519) in the loop of a conserved hairpin near the 3'-end of 16S rRNA in the 30S particle. May play a critical role in biogenesis of 30S subunits. The protein is Ribosomal RNA small subunit methyltransferase A of Burkholderia orbicola (strain MC0-3).